A 263-amino-acid polypeptide reads, in one-letter code: 3-methyl-2-oxobutanoate hydroxymethyltransferase (263 aa).

Positions 43 and 82 each coordinate Mg(2+). 3-methyl-2-oxobutanoate contacts are provided by residues 43 to 44, Asp-82, and Lys-111; that span reads DS. Glu-113 is a binding site for Mg(2+). The active-site Proton acceptor is the Glu-179.

The protein belongs to the PanB family. In terms of assembly, homodecamer; pentamer of dimers. Requires Mg(2+) as cofactor.

Its subcellular location is the cytoplasm. It carries out the reaction 3-methyl-2-oxobutanoate + (6R)-5,10-methylene-5,6,7,8-tetrahydrofolate + H2O = 2-dehydropantoate + (6S)-5,6,7,8-tetrahydrofolate. It functions in the pathway cofactor biosynthesis; (R)-pantothenate biosynthesis; (R)-pantoate from 3-methyl-2-oxobutanoate: step 1/2. In terms of biological role, catalyzes the reversible reaction in which hydroxymethyl group from 5,10-methylenetetrahydrofolate is transferred onto alpha-ketoisovalerate to form ketopantoate. The sequence is that of 3-methyl-2-oxobutanoate hydroxymethyltransferase from Neisseria meningitidis serogroup B (strain ATCC BAA-335 / MC58).